The chain runs to 174 residues: Eukaryotic translation elongation factor 1 epsilon-1 (174 aa).

Residue alanine 2 is modified to N-acetylalanine. The interval 2 to 56 (AAAAELSLLEKSLGLSKGNKYSAQGERQIPVLQTNNGPSLTGLTTIAAHLVKQAN) is N-terminal. Residues 50–173 (HLVKQANKEY…FIKNRLYTNS (124 aa)) form the GST C-terminal domain. The tract at residues 57 to 63 (KEYLLGS) is linker. The tract at residues 64 to 152 (TAEEKAIVQQ…SRWFCHIQHY (89 aa)) is C-terminal. Lysine 138 carries the post-translational modification N6-acetyllysine. Positions 153-169 (PGIRQHLSSVVFIKNRL) form a coiled coil.

In terms of assembly, part of a multisubunit complex that groups tRNA ligases for Arg (RARS1), Asp (DARS1), Gln (QARS1), Ile (IARS1), Leu (LARS1), Lys (KARS1), Met (MARS1) the bifunctional ligase for Glu and Pro (EPRS1) and the auxiliary subunits AIMP1/p43, AIMP2/p38 and EEF1E1/p18. Can interact simultaneously with MARS1 and EPRS1. Forms a linear complex that contains MARS1, EEF1E1, EPRS1 and AIMP2 that is at the core of the multisubunit complex. Interacts with ATM and ATR. The interaction with ATM, which takes place independently of TP53, is induced by DNA damage that may occur during genotoxic stress or cell growth. The interaction with ATR is enhanced by UV irradiation. In terms of tissue distribution, down-regulated in various cancer tissues.

It localises to the cytoplasm. Its subcellular location is the cytosol. It is found in the nucleus. Functionally, positive modulator of ATM response to DNA damage. The protein is Eukaryotic translation elongation factor 1 epsilon-1 (EEF1E1) of Homo sapiens (Human).